A 124-amino-acid polypeptide reads, in one-letter code: Glycine cleavage system H protein (124 aa).

The Lipoyl-binding domain maps to 22–104; sequence KAKVGITDFA…YENGYLFIIE (83 aa). The residue at position 63 (K63) is an N6-lipoyllysine.

This sequence belongs to the GcvH family. In terms of assembly, the glycine cleavage system is composed of four proteins: P, T, L and H. (R)-lipoate is required as a cofactor.

The glycine cleavage system catalyzes the degradation of glycine. The H protein shuttles the methylamine group of glycine from the P protein to the T protein. In Endomicrobium trichonymphae, this protein is Glycine cleavage system H protein.